The following is a 446-amino-acid chain: Phosphoglucosamine mutase (446 aa).

Ser88 functions as the Phosphoserine intermediate in the catalytic mechanism. Ser88, Asp231, Asp233, and Asp235 together coordinate Mg(2+). Ser88 is modified (phosphoserine).

It belongs to the phosphohexose mutase family. Requires Mg(2+) as cofactor. Activated by phosphorylation.

It carries out the reaction alpha-D-glucosamine 1-phosphate = D-glucosamine 6-phosphate. In terms of biological role, catalyzes the conversion of glucosamine-6-phosphate to glucosamine-1-phosphate. The sequence is that of Phosphoglucosamine mutase from Methanococcus vannielii (strain ATCC 35089 / DSM 1224 / JCM 13029 / OCM 148 / SB).